Consider the following 425-residue polypeptide: Light-independent protochlorophyllide reductase subunit N (425 aa).

The [4Fe-4S] cluster site is built by Cys17, Cys42, and Cys103.

Belongs to the BchN/ChlN family. Protochlorophyllide reductase is composed of three subunits; ChlL, ChlN and ChlB. Forms a heterotetramer of two ChlB and two ChlN subunits. [4Fe-4S] cluster serves as cofactor.

The enzyme catalyses chlorophyllide a + oxidized 2[4Fe-4S]-[ferredoxin] + 2 ADP + 2 phosphate = protochlorophyllide a + reduced 2[4Fe-4S]-[ferredoxin] + 2 ATP + 2 H2O. It participates in porphyrin-containing compound metabolism; chlorophyll biosynthesis (light-independent). Its function is as follows. Component of the dark-operative protochlorophyllide reductase (DPOR) that uses Mg-ATP and reduced ferredoxin to reduce ring D of protochlorophyllide (Pchlide) to form chlorophyllide a (Chlide). This reaction is light-independent. The NB-protein (ChlN-ChlB) is the catalytic component of the complex. This chain is Light-independent protochlorophyllide reductase subunit N, found in Parasynechococcus marenigrum (strain WH8102).